The chain runs to 414 residues: Glutamyl-tRNA reductase (414 aa).

Substrate contacts are provided by residues 47–50 (TCNR), serine 106, 111–113 (EAQ), and glutamine 117. Cysteine 48 functions as the Nucleophile in the catalytic mechanism. 185–190 (GAGRTG) lines the NADP(+) pocket.

It belongs to the glutamyl-tRNA reductase family. Homodimer.

The enzyme catalyses (S)-4-amino-5-oxopentanoate + tRNA(Glu) + NADP(+) = L-glutamyl-tRNA(Glu) + NADPH + H(+). It participates in porphyrin-containing compound metabolism; protoporphyrin-IX biosynthesis; 5-aminolevulinate from L-glutamyl-tRNA(Glu): step 1/2. In terms of biological role, catalyzes the NADPH-dependent reduction of glutamyl-tRNA(Glu) to glutamate 1-semialdehyde (GSA). The polypeptide is Glutamyl-tRNA reductase (Herpetosiphon aurantiacus (strain ATCC 23779 / DSM 785 / 114-95)).